The primary structure comprises 915 residues: Transferrin-binding protein A (915 aa).

The first 24 residues, 1–24, serve as a signal peptide directing secretion; the sequence is MQQQHLFRFNILCLSLMTALPAYA. Residues 25-187 lie on the Periplasmic side of the membrane; sequence ENVQAGQAQE…ADDVIGEGRQ (163 aa). The short motif at 38-45 is the TonB box element; it reads DTIQVKAK. The TBDR plug domain maps to 51–176; the sequence is RDNEVTGLGK…LAGSVAFQTK (126 aa). The plug loop, interacts with transferrin stretch occupies residues 121–139; sequence SYTAQAALGGTRTAGSSGA. The TBDR beta-barrel domain occupies 187–915; it reads QWGIQSKTAY…NYTFSLEMKF (729 aa). The chain crosses the membrane as a beta stranded span at residues 188-197; it reads WGIQSKTAYS. Residues 198–203 are Extracellular-facing; it reads GKNRGL. A beta stranded transmembrane segment spans residues 204–213; the sequence is TQSIALAGRI. Residues 214–215 lie on the Periplasmic side of the membrane; that stretch reads GG. Residues 216–225 traverse the membrane as a beta stranded segment; it reads AEALLIHTGR. The Extracellular segment spans residues 226–309; it reads RAGEIRAHED…FLADPLSYES (84 aa). The beta stranded transmembrane segment at 310-319 threads the bilayer; that stretch reads RSWLFRPGFR. The Periplasmic segment spans residues 320–324; sequence FENKR. The beta stranded transmembrane segment at 325 to 334 threads the bilayer; that stretch reads HYIGGILEHT. Residues 335–406 are Extracellular-facing; the sequence is QQTFDTRDMT…VFYDETHTKS (72 aa). Residues 351 to 361 form an L3 helix finger, interacts with transferrin region; it reads KAVFDANKKQA. A beta stranded membrane pass occupies residues 407–415; sequence RYGLEYVYT. Residues 416-423 lie on the Periplasmic side of the membrane; the sequence is NADKDTWA. A beta stranded transmembrane segment spans residues 424 to 433; the sequence is DYARLSYDRQ. Over 434 to 478 the chain is Extracellular; the sequence is GIGLDNHFQQTHCSADGSDKYCRPSADKPFSYYKSDRVIYGESHR. Residues 479–488 traverse the membrane as a beta stranded segment; the sequence is LLQAAFKKSF. Over 489 to 494 the chain is Periplasmic; it reads DTAKIR. Residues 495-504 traverse the membrane as a beta stranded segment; the sequence is HNLSVNLGFD. Over 505-583 the chain is Extracellular; the sequence is RFGSNLRHQD…PRSINGKSYY (79 aa). The interval 523-542 is disordered; it reads AYSSNTPPQNNGKKISPNGS. Residues 584-592 form a beta stranded membrane-spanning segment; that stretch reads AAVRDNVRL. Residues 593-594 lie on the Periplasmic side of the membrane; that stretch reads GR. The chain crosses the membrane as a beta stranded span at residues 595-603; that stretch reads WADVGAGLR. Topologically, residues 604–623 are extracellular; it reads YDYRSTHSDDGSVSTGTHRT. Residues 624–633 form a beta stranded membrane-spanning segment; it reads LSWNAGIVLK. The Periplasmic segment spans residues 634–637; the sequence is PTDW. The chain crosses the membrane as a beta stranded span at residues 638 to 647; that stretch reads LDLTYRTSTG. The Extracellular portion of the chain corresponds to 648-675; that stretch reads FRLPSFAEMYGWRAGVQSKAVKIDPEKS. The beta stranded transmembrane segment at 676–685 threads the bilayer; sequence FNKEAGIVFK. Residues 686–689 are Periplasmic-facing; sequence GDFG. The beta stranded transmembrane segment at 690–699 threads the bilayer; that stretch reads NLEASWFNNA. Topologically, residues 700–733 are extracellular; sequence YRDLIVRGYEAQIKDGKEEAKGDPAYLNAQSARI. Residues 734-743 form a beta stranded membrane-spanning segment; it reads TGINILGKID. Over 744 to 755 the chain is Periplasmic; that stretch reads WNGVWDKLPEGW. The beta stranded transmembrane segment at 756 to 765 threads the bilayer; that stretch reads YSTFAYNRVR. The Extracellular portion of the chain corresponds to 766–790; it reads VRDIKKRADRTDIQSHLFDAIQPSR. The chain crosses the membrane as a beta stranded span at residues 791-799; it reads YVVGLGYDQ. The Periplasmic segment spans residues 800–802; the sequence is PEG. The chain crosses the membrane as a beta stranded span at residues 803–811; it reads KWGVNGMLT. Residues 812 to 845 lie on the Extracellular side of the membrane; sequence YSKAKEITELLGSRALLNGNSRNTKATARRTRPW. The chain crosses the membrane as a beta stranded span at residues 846–855; sequence YIVDVSGYYT. The Periplasmic segment spans residues 856–860; it reads VKKHF. A beta stranded membrane pass occupies residues 861 to 870; it reads TLRAGVYNLL. Residues 871–905 are Extracellular-facing; it reads NYRYVTWENVRQTAGGAVNQHKNVGVYNRYAAPGR. Positions 898 to 915 match the TonB C-terminal box motif; it reads NRYAAPGRNYTFSLEMKF. Residues 906–915 traverse the membrane as a beta stranded segment; it reads NYTFSLEMKF.

The protein belongs to the TonB-dependent receptor family. As to quaternary structure, binds both human apo- and holo-transferrin (TF), via the TF C-terminus. Forms a large complex with TF and TbpB.

Its subcellular location is the cell outer membrane. Its function is as follows. Neisseria acquires iron by extracting it from serum transferrin (TF) in its human host. Acts as a TF receptor and is required for TF utilization. Binds both apo- and holo-TF, via the TF C-terminus. The polypeptide is Transferrin-binding protein A (Neisseria meningitidis serogroup B (strain ATCC BAA-335 / MC58)).